Here is a 155-residue protein sequence, read N- to C-terminus: Microsomal glutathione S-transferase 1 (155 aa).

Residues 3–9 (DLTQVMD) are Lumenal-facing. A helical membrane pass occupies residues 10–33 (DEVFMAFASYATIILSKMMLMSTA). The Cytoplasmic portion of the chain corresponds to 34-62 (TAFYRLTRKVFANPEDCVAFGKGENAKKY). Arg38 contacts glutathione. An N6-acetyllysine mark is found at Lys42, Lys55, and Lys60. A helical transmembrane segment spans residues 63–96 (LRTDDRVERVRRAHLNDLENIIPFLGIGLLYSLS). Glutathione is bound by residues Arg73, Arg74, His76, and Glu81. The Lumenal segment spans residues 97–99 (GPD). Residues 100–123 (PSTAILHFRLFVGARIYHTIAYLT) traverse the membrane as a helical segment. Tyr121 contributes to the glutathione binding site. Residues 124-128 (PLPQP) are Cytoplasmic-facing. A helical membrane pass occupies residues 129–148 (NRALSFFVGYGVTLSMAYRL). Residues 149-155 (LKSKLYL) are Lumenal-facing.

It belongs to the MAPEG family. Homotrimer; The trimer binds only one molecule of glutathione. As to expression, highly expressed in liver.

The protein localises to the endoplasmic reticulum membrane. Its subcellular location is the mitochondrion outer membrane. The catalysed reaction is RX + glutathione = an S-substituted glutathione + a halide anion + H(+). Conjugation of reduced glutathione to a wide number of exogenous and endogenous hydrophobic electrophiles. The sequence is that of Microsomal glutathione S-transferase 1 (MGST1) from Homo sapiens (Human).